A 342-amino-acid polypeptide reads, in one-letter code: Phosphoribosylformylglycinamidine cyclo-ligase (342 aa).

It belongs to the AIR synthase family.

The protein localises to the cytoplasm. It carries out the reaction 2-formamido-N(1)-(5-O-phospho-beta-D-ribosyl)acetamidine + ATP = 5-amino-1-(5-phospho-beta-D-ribosyl)imidazole + ADP + phosphate + H(+). The protein operates within purine metabolism; IMP biosynthesis via de novo pathway; 5-amino-1-(5-phospho-D-ribosyl)imidazole from N(2)-formyl-N(1)-(5-phospho-D-ribosyl)glycinamide: step 2/2. The polypeptide is Phosphoribosylformylglycinamidine cyclo-ligase (Staphylococcus aureus (strain Mu3 / ATCC 700698)).